Consider the following 153-residue polypeptide: Endoribonuclease YbeY (153 aa).

H115, H119, and H125 together coordinate Zn(2+).

Belongs to the endoribonuclease YbeY family. The cofactor is Zn(2+).

The protein resides in the cytoplasm. Its function is as follows. Single strand-specific metallo-endoribonuclease involved in late-stage 70S ribosome quality control and in maturation of the 3' terminus of the 16S rRNA. This chain is Endoribonuclease YbeY, found in Blochmanniella floridana.